We begin with the raw amino-acid sequence, 91 residues long: MGLEDEQKMLTESGDPEEEEEEEEELVDPLTTVREQCEQLEKCVKARERLELCDERVSSRSHTEEDCTEELFDFLHARDHCVAHKLFNNLK.

The transit peptide at 1–13 (MGLEDEQKMLTES) directs the protein to the mitochondrion. Residues 1–30 (MGLEDEQKMLTESGDPEEEEEEEEELVDPL) are disordered. Over residues 14 to 27 (GDPEEEEEEEEELV) the composition is skewed to acidic residues. 2 disulfide bridges follow: Cys37–Cys81 and Cys53–Cys67. N6-acetyllysine is present on Lys42. Lys85 carries the N6-acetyllysine modification.

The protein belongs to the UQCRH/QCR6 family. Component of the ubiquinol-cytochrome c oxidoreductase (cytochrome b-c1 complex, complex III, CIII), a multisubunit enzyme composed of 11 subunits. The complex is composed of 3 respiratory subunits cytochrome b, cytochrome c1 and Rieske protein UQCRFS1, 2 core protein subunits UQCRC1/QCR1 and UQCRC2/QCR2, and 6 low-molecular weight protein subunits UQCRH/QCR6, UQCRB/QCR7, UQCRQ/QCR8, UQCR10/QCR9, UQCR11/QCR10 and subunit 9, the cleavage product of Rieske protein UQCRFS1. The complex exists as an obligatory dimer and forms supercomplexes (SCs) in the inner mitochondrial membrane with NADH-ubiquinone oxidoreductase (complex I, CI) and cytochrome c oxidase (complex IV, CIV), resulting in different assemblies (supercomplex SCI(1)III(2)IV(1) and megacomplex MCI(2)III(2)IV(2)).

It is found in the mitochondrion inner membrane. In terms of biological role, component of the ubiquinol-cytochrome c oxidoreductase, a multisubunit transmembrane complex that is part of the mitochondrial electron transport chain which drives oxidative phosphorylation. The respiratory chain contains 3 multisubunit complexes succinate dehydrogenase (complex II, CII), ubiquinol-cytochrome c oxidoreductase (cytochrome b-c1 complex, complex III, CIII) and cytochrome c oxidase (complex IV, CIV), that cooperate to transfer electrons derived from NADH and succinate to molecular oxygen, creating an electrochemical gradient over the inner membrane that drives transmembrane transport and the ATP synthase. The cytochrome b-c1 complex catalyzes electron transfer from ubiquinol to cytochrome c, linking this redox reaction to translocation of protons across the mitochondrial inner membrane, with protons being carried across the membrane as hydrogens on the quinol. In the process called Q cycle, 2 protons are consumed from the matrix, 4 protons are released into the intermembrane space and 2 electrons are passed to cytochrome c. The protein is Cytochrome b-c1 complex subunit 6, mitochondrial (UQCRH) of Homo sapiens (Human).